The chain runs to 530 residues: AAA-ATPase At3g28510 (530 aa).

A helical transmembrane segment spans residues 5–25 (GAIWGITGTTVTSFMFFWAIY). An ATP-binding site is contributed by 250–257 (GPPGTGKS). 2 disordered regions span residues 312-339 (QRKK…KVDD) and 463-530 (KARK…KSDS). 2 stretches are compositionally biased toward basic and acidic residues: residues 326–339 (EEKK…KVDD) and 463–511 (KARK…KEEN). A compositionally biased stretch (polar residues) spans 512-523 (GNVSQQNGNSID).

This sequence belongs to the AAA ATPase family. BCS1 subfamily. Mg(2+) is required as a cofactor.

Its subcellular location is the membrane. The enzyme catalyses ATP + H2O = ADP + phosphate + H(+). This Arabidopsis thaliana (Mouse-ear cress) protein is AAA-ATPase At3g28510.